Reading from the N-terminus, the 487-residue chain is Benzaldehyde dehydrogenase [NAD(+)] (487 aa).

Gly-232–Gly-237 contacts NAD(+). Catalysis depends on residues Glu-254 and Cys-288.

The protein belongs to the aldehyde dehydrogenase family. In terms of assembly, homotetramer.

The catalysed reaction is benzaldehyde + NAD(+) + H2O = benzoate + NADH + 2 H(+). This is Benzaldehyde dehydrogenase [NAD(+)] (xylC) from Pseudomonas putida (Arthrobacter siderocapsulatus).